The primary structure comprises 289 residues: Bis(5'-nucleosyl)-tetraphosphatase, symmetrical (289 aa).

It belongs to the Ap4A hydrolase family.

It catalyses the reaction P(1),P(4)-bis(5'-adenosyl) tetraphosphate + H2O = 2 ADP + 2 H(+). In terms of biological role, hydrolyzes diadenosine 5',5'''-P1,P4-tetraphosphate to yield ADP. In Yersinia pestis bv. Antiqua (strain Antiqua), this protein is Bis(5'-nucleosyl)-tetraphosphatase, symmetrical.